The sequence spans 429 residues: Ribosomal RNA small subunit methyltransferase B (429 aa).

S-adenosyl-L-methionine contacts are provided by residues 254 to 260, Asp277, Asp303, and Asp322; that span reads CAAPGGK. Cys375 serves as the catalytic Nucleophile.

It belongs to the class I-like SAM-binding methyltransferase superfamily. RsmB/NOP family.

Its subcellular location is the cytoplasm. It carries out the reaction cytidine(967) in 16S rRNA + S-adenosyl-L-methionine = 5-methylcytidine(967) in 16S rRNA + S-adenosyl-L-homocysteine + H(+). Its function is as follows. Specifically methylates the cytosine at position 967 (m5C967) of 16S rRNA. The chain is Ribosomal RNA small subunit methyltransferase B from Yersinia pseudotuberculosis serotype O:1b (strain IP 31758).